The following is a 1089-amino-acid chain: WD repeat-containing protein on Y chromosome (1089 aa).

WD repeat units follow at residues 155–199, 207–249, 329–368, 372–411, 462–501, 514–553, and 601–641; these read EEVA…IRTA, PHAV…RGPF, RIPL…EPSA, GHNG…LLQT, THAA…RKII, TIDI…VIRN, and FHTD…RRYS. The interval 661–684 is disordered; it reads KRSKRWASRAPHSGSHMMSHTGSH. Over residues 672–684 the composition is skewed to low complexity; that stretch reads HSGSHMMSHTGSH. WD repeat units lie at residues 767–806 and 850–889; these read KTGD…IPEA and GHLK…LGTL. A disordered region spans residues 1049-1089; that stretch reads LNIKLPSRRRSDRTNDPRNMRTAKTRGDMGLGHRSSHTSQN.

This chain is WD repeat-containing protein on Y chromosome, found in Drosophila willistoni (Fruit fly).